The primary structure comprises 465 residues: Cysteine--tRNA ligase (465 aa).

Position 30 (Cys30) interacts with Zn(2+). The 'HIGH' region motif lies at 32–42 (ITVYDYCHVGH). Zn(2+) contacts are provided by Cys214, His239, and Glu243. The 'KMSKS' region motif lies at 271–275 (KMSKS). Residue Lys274 participates in ATP binding.

Belongs to the class-I aminoacyl-tRNA synthetase family. In terms of assembly, monomer. Zn(2+) serves as cofactor.

The protein resides in the cytoplasm. The catalysed reaction is tRNA(Cys) + L-cysteine + ATP = L-cysteinyl-tRNA(Cys) + AMP + diphosphate. In Burkholderia multivorans (strain ATCC 17616 / 249), this protein is Cysteine--tRNA ligase.